Consider the following 301-residue polypeptide: Probable 5-dehydro-4-deoxyglucarate dehydratase (301 aa).

This sequence belongs to the DapA family.

It carries out the reaction 5-dehydro-4-deoxy-D-glucarate + H(+) = 2,5-dioxopentanoate + CO2 + H2O. It functions in the pathway carbohydrate acid metabolism; D-glucarate degradation; 2,5-dioxopentanoate from D-glucarate: step 2/2. The chain is Probable 5-dehydro-4-deoxyglucarate dehydratase from Allorhizobium ampelinum (strain ATCC BAA-846 / DSM 112012 / S4) (Agrobacterium vitis (strain S4)).